Reading from the N-terminus, the 402-residue chain is Secondary metabolism regulator laeA (402 aa).

The tract at residues Met1–Asp70 is disordered. The segment covering Ser11–Cys21 has biased composition (acidic residues).

It belongs to the methyltransferase superfamily. LaeA methyltransferase family.

It localises to the nucleus. The enzyme catalyses L-methionyl-[protein] + S-adenosyl-L-methionine = S-methyl-L-methionyl-[protein] + S-adenosyl-L-homocysteine. Its function is as follows. Methyltransferase that performs automethylation. No other methyl-accepting substrate has been identified yet. Acts as a global regulator for secondary metabolite gene expression. Negatively regulates the production of coprinoferrin, a structurally novel acylated tripeptide hydroxamate siderophore. The sequence is that of Secondary metabolism regulator laeA from Coprinopsis cinerea (strain Okayama-7 / 130 / ATCC MYA-4618 / FGSC 9003) (Inky cap fungus).